Consider the following 281-residue polypeptide: Pantothenate synthetase (281 aa).

30 to 37 is a binding site for ATP; sequence MGALHRGH. The active-site Proton donor is His37. Gln61 serves as a coordination point for (R)-pantoate. Beta-alanine is bound at residue Gln61. 147–150 is an ATP binding site; sequence GEKD. Gln153 serves as a coordination point for (R)-pantoate. Residues Ile176 and 184–187 each bind ATP; that span reads LSSR.

This sequence belongs to the pantothenate synthetase family. In terms of assembly, homodimer.

Its subcellular location is the cytoplasm. It catalyses the reaction (R)-pantoate + beta-alanine + ATP = (R)-pantothenate + AMP + diphosphate + H(+). It functions in the pathway cofactor biosynthesis; (R)-pantothenate biosynthesis; (R)-pantothenate from (R)-pantoate and beta-alanine: step 1/1. In terms of biological role, catalyzes the condensation of pantoate with beta-alanine in an ATP-dependent reaction via a pantoyl-adenylate intermediate. The protein is Pantothenate synthetase of Porphyromonas gingivalis (strain ATCC BAA-308 / W83).